The chain runs to 283 residues: uncharacterized protein (283 aa).

3 consecutive transmembrane segments (helical) span residues 18–38, 61–81, and 94–114; these read VYDI…AKLI, VIYF…LGLD, and IVLG…IFLI.

This sequence belongs to the MscS (TC 1.A.23) family.

It localises to the cell membrane. This is an uncharacterized protein from Archaeoglobus fulgidus (strain ATCC 49558 / DSM 4304 / JCM 9628 / NBRC 100126 / VC-16).